A 298-amino-acid polypeptide reads, in one-letter code: Small ribosomal subunit protein uS3m (298 aa).

It belongs to the universal ribosomal protein uS3 family.

Its subcellular location is the mitochondrion. In Acanthamoeba castellanii (Amoeba), this protein is Small ribosomal subunit protein uS3m (RPS3).